The primary structure comprises 304 residues: tRNA-uridine aminocarboxypropyltransferase 1 (304 aa).

Positions 1-30 (MALSPSVVPQESEENNANCVETKQSQTAST) are disordered. A compositionally biased stretch (polar residues) spans 15 to 30 (NNANCVETKQSQTAST). The DXTW signature appears at 206–209 (DSTW).

This sequence belongs to the TDD superfamily. DTWD1 family.

It localises to the nucleus. It carries out the reaction a uridine in tRNA + S-adenosyl-L-methionine = a 3-[(3S)-3-amino-3-carboxypropyl]uridine in tRNA + S-methyl-5'-thioadenosine + H(+). Functionally, catalyzes the formation of 3-(3-amino-3-carboxypropyl)uridine (acp3U) at position 20 in the D-loop of several cytoplasmic tRNAs (acp3U(20)). The polypeptide is tRNA-uridine aminocarboxypropyltransferase 1 (Rattus norvegicus (Rat)).